Reading from the N-terminus, the 362-residue chain is Prostaglandin F2-alpha receptor (362 aa).

Over 1–31 the chain is Extracellular; that stretch reads MSTNSSIQPVSPESELLSNTTCQLEEDLSIS. N-linked (GlcNAc...) asparagine glycans are attached at residues Asn4 and Asn19. A helical transmembrane segment spans residues 32-54; the sequence is FSIIFMTVGILSNSLAIAILMKA. Residues 55 to 69 lie on the Cytoplasmic side of the membrane; sequence YQRFRQKYKSSFLLL. The chain crosses the membrane as a helical span at residues 70-90; it reads ASALVITDFFGHLINGTIAVF. Over 91–109 the chain is Extracellular; that stretch reads VYASDKDWIYFDKSNILCS. The cysteines at positions 108 and 186 are disulfide-linked. A helical transmembrane segment spans residues 110-131; the sequence is IFGICMVFSGLCPLFLGSLMAI. Topologically, residues 132–152 are cytoplasmic; sequence ERCIGVTKPIFHSTKITTKHV. Residues 153-175 form a helical membrane-spanning segment; it reads KMMLSGVCFFAVFVALLPILGHR. At 176–198 the chain is on the extracellular side; sequence DYKIQASRTWCFYKTDEIKDWED. A helical membrane pass occupies residues 199–224; that stretch reads RFYLLLFAFLGLLALGISFVCNAITG. Over 225 to 250 the chain is Cytoplasmic; the sequence is ISLLKVKFRSQQHRQGRSHHFEMVIQ. Residues 251–267 form a helical membrane-spanning segment; sequence LLGIMCVSCICWSPFLV. Residues 268–285 are Extracellular-facing; sequence TMASIGMNIQDFKDSCER. A helical transmembrane segment spans residues 286 to 307; the sequence is TLFTLRMATWNQILDPWVYILL. Residues 308 to 362 lie on the Cytoplasmic side of the membrane; the sequence is RKAVLRNLYVCTRRCCGVHVISLHVWELSSIKDSLKVAAISDLPVTEKVTQQTST.

Belongs to the G-protein coupled receptor 1 family.

It is found in the cell membrane. In terms of biological role, receptor for prostaglandin F2-alpha (PGF2-alpha). The activity of this receptor is mediated by G proteins which activate a phosphatidylinositol-calcium second messenger system. Initiates luteolysis in the corpus luteum. The polypeptide is Prostaglandin F2-alpha receptor (PTGFR) (Bos taurus (Bovine)).